The sequence spans 209 residues: Response regulator protein VraR (209 aa).

The 117-residue stretch at 4–120 (KVLFVDDHEM…DIADAVRKTY (117 aa)) folds into the Response regulatory domain. At Asp55 the chain carries 4-aspartylphosphate. Residues 141 to 206 (RAELYEMLTE…QAVIYAFQHN (66 aa)) enclose the HTH luxR-type domain. The segment at residues 165–184 (NQEIASASHITIKTVKTHVS) is a DNA-binding region (H-T-H motif).

In terms of processing, phosphorylated by VraS.

The protein resides in the cytoplasm. Its function is as follows. Member of the two-component regulatory system VraS/VraR involved in the control of the cell wall peptidoglycan biosynthesis. The sequence is that of Response regulator protein VraR (vraR) from Staphylococcus epidermidis (strain ATCC 35984 / DSM 28319 / BCRC 17069 / CCUG 31568 / BM 3577 / RP62A).